We begin with the raw amino-acid sequence, 478 residues long: V-type proton ATPase subunit H (478 aa).

This sequence belongs to the V-ATPase H subunit family. As to quaternary structure, V-ATPase is a heteromultimeric enzyme composed of a peripheral catalytic V1 complex (components A to H) attached to an integral membrane V0 proton pore complex (components: a, c, c', c'', d, e, f and VOA1). Interacts with YND1.

It is found in the vacuole membrane. Functionally, subunit of the V1 complex of vacuolar(H+)-ATPase (V-ATPase), a multisubunit enzyme composed of a peripheral complex (V1) that hydrolyzes ATP and a membrane integral complex (V0) that translocates protons. V-ATPase is responsible for acidifying and maintaining the pH of intracellular compartments. This subunit is essential for activity, but not assembly, of the enzyme complex. This subunit is also required for silencing the ATPase activity of V-ATPase when V1 is detached from V0. In Saccharomyces cerevisiae (strain ATCC 204508 / S288c) (Baker's yeast), this protein is V-type proton ATPase subunit H.